Here is a 168-residue protein sequence, read N- to C-terminus: MLVYQDLLTGDELLSDSFPYREIENGILWEVDGKWVVQGAIDVDIGANPSAEGGGDDEGVDDQAVKVVDIVDTFRLQEQPPFDKKQFVTFMKRYIKNLSAKLDAEKQEEFKKNIEGATKYLLGKLKDLQFFVGESMHDDGGLVFAYYKDGATDPTFLYFSHGLKEVKC.

Positions 1–168 (MLVYQDLLTG…FSHGLKEVKC (168 aa)) constitute a TCTP domain.

Belongs to the TCTP family.

The protein localises to the cytoplasm. Involved in calcium binding and microtubule stabilization. In Oryza sativa subsp. japonica (Rice), this protein is Translationally-controlled tumor protein homolog (TCTP).